We begin with the raw amino-acid sequence, 414 residues long: Imidazolonepropionase (414 aa).

The Fe(3+) site is built by His-73 and His-75. Zn(2+) is bound by residues His-73 and His-75. Positions 82, 145, and 178 each coordinate 4-imidazolone-5-propanoate. Residue Tyr-145 participates in N-formimidoyl-L-glutamate binding. His-249 contacts Fe(3+). His-249 provides a ligand contact to Zn(2+). 4-imidazolone-5-propanoate is bound at residue Gln-252. Residue Asp-324 coordinates Fe(3+). Asp-324 provides a ligand contact to Zn(2+). 2 residues coordinate N-formimidoyl-L-glutamate: Asn-326 and Gly-328. Ser-329 serves as a coordination point for 4-imidazolone-5-propanoate.

The protein belongs to the metallo-dependent hydrolases superfamily. HutI family. Zn(2+) serves as cofactor. Requires Fe(3+) as cofactor.

Its subcellular location is the cytoplasm. It carries out the reaction 4-imidazolone-5-propanoate + H2O = N-formimidoyl-L-glutamate. Its pathway is amino-acid degradation; L-histidine degradation into L-glutamate; N-formimidoyl-L-glutamate from L-histidine: step 3/3. Its function is as follows. Catalyzes the hydrolytic cleavage of the carbon-nitrogen bond in imidazolone-5-propanoate to yield N-formimidoyl-L-glutamate. It is the third step in the universal histidine degradation pathway. This chain is Imidazolonepropionase, found in Shewanella pealeana (strain ATCC 700345 / ANG-SQ1).